The sequence spans 534 residues: BEN domain-containing protein 4 (534 aa).

Disordered stretches follow at residues 1–24 (MEEE…RSPY), 48–128 (ELPH…AASS), and 287–322 (VHTL…EEGY). Pro residues predominate over residues 53–63 (RAPPPPPPPFA). Positions 69–83 (SISSSEPPPQQFQAQ) are enriched in polar residues. Low complexity predominate over residues 91–109 (GRAAAAASSSSPSCTPATS). The span at 295–310 (SPATSESHGHPSSSTL) shows a compositional bias: polar residues. Over residues 311 to 321 (PEEEEEEDEEG) the composition is skewed to acidic residues. Residues 324 to 351 (PRCQELEQEVISLQQENEELRRKLESIP) are a coiled coil. In terms of domain architecture, BEN spans 390 to 498 (NYPVYITSKQ…DAVGHARQGR (109 aa)).

The polypeptide is BEN domain-containing protein 4 (BEND4) (Homo sapiens (Human)).